Consider the following 208-residue polypeptide: Intraflagellar transport protein 43 homolog (208 aa).

M1 is modified (N-acetylmethionine). The interval 18-65 (SRAKMGRRAQQESAQAENHLNGKNSSLTLTGETSSAKLPRCRQGGWAG) is disordered. Positions 28–53 (QESAQAENHLNGKNSSLTLTGETSSA) are enriched in polar residues. The residue at position 78 (S78) is a Phosphoserine.

It belongs to the IFT43 family. As to quaternary structure, component of the IFT complex A (IFT-A) complex. IFT-A complex is divided into a core subcomplex composed of IFT122:IFT140:WDR19 which is associated with TULP3 and a peripheral subcomplex composed of IFT43:WDR35:TTC21B. Interacts directy with IFT122, WDR35 and TTC21B. In terms of tissue distribution, expressed in the retina, predominantly in the photoreceptor outer segment.

The protein resides in the cytoplasm. It localises to the cytoskeleton. Its subcellular location is the cell projection. It is found in the cilium. Its function is as follows. As a component of IFT complex A (IFT-A), a complex required for retrograde ciliary transport and entry into cilia of G protein-coupled receptors (GPCRs), it is involved in ciliogenesis. Involved in retrograde ciliary transport along microtubules from the ciliary tip to the base. The polypeptide is Intraflagellar transport protein 43 homolog (Homo sapiens (Human)).